A 266-amino-acid polypeptide reads, in one-letter code: Signal peptidase I (266 aa).

The Cytoplasmic portion of the chain corresponds to 1–20 (MQTDNTKSNTNKTAKQEWGS). The chain crosses the membrane as a helical span at residues 21 to 41 (FAFVICIALLIRILIMEPFTV). Residues 42–266 (PTGSMKATIL…IFRNLYNTDA (225 aa)) are Periplasmic-facing. Active-site residues include Ser-45 and Lys-108.

This sequence belongs to the peptidase S26 family.

The protein localises to the cell inner membrane. The enzyme catalyses Cleavage of hydrophobic, N-terminal signal or leader sequences from secreted and periplasmic proteins.. Functionally, complements E.coli mutants temperature-sensitive for LepB function. The sequence is that of Signal peptidase I (lepB) from Rickettsia rickettsii (strain Sheila Smith).